We begin with the raw amino-acid sequence, 201 residues long: uncharacterized protein (201 aa).

A disordered region spans residues 1–22; sequence MAASKAAKSSEDRAGGGGGGGG.

This is an uncharacterized protein from Tomato ringspot virus (isolate raspberry) (ToRSV).